The following is a 336-amino-acid chain: Phospho-N-acetylmuramoyl-pentapeptide-transferase (336 aa).

10 helical membrane-spanning segments follow: residues 3–23 (LTLI…PYFI), 53–73 (GGTV…LFSI), 78–98 (SLAL…IGFL), 118–138 (LALQ…PSGI), 143–163 (VFGY…FWVV), 174–194 (GIDG…GVIA), 200–220 (FDVL…FCFN), 226–246 (VFMG…ISIA), 251–271 (WTLL…MLQV), and 316–336 (AFLW…LYVF).

The protein belongs to the glycosyltransferase 4 family. MraY subfamily. It depends on Mg(2+) as a cofactor.

Its subcellular location is the cell membrane. It catalyses the reaction UDP-N-acetyl-alpha-D-muramoyl-L-alanyl-gamma-D-glutamyl-L-lysyl-D-alanyl-D-alanine + di-trans,octa-cis-undecaprenyl phosphate = Mur2Ac(oyl-L-Ala-gamma-D-Glu-L-Lys-D-Ala-D-Ala)-di-trans,octa-cis-undecaprenyl diphosphate + UMP. The protein operates within cell wall biogenesis; peptidoglycan biosynthesis. Catalyzes the initial step of the lipid cycle reactions in the biosynthesis of the cell wall peptidoglycan: transfers peptidoglycan precursor phospho-MurNAc-pentapeptide from UDP-MurNAc-pentapeptide onto the lipid carrier undecaprenyl phosphate, yielding undecaprenyl-pyrophosphoryl-MurNAc-pentapeptide, known as lipid I. This chain is Phospho-N-acetylmuramoyl-pentapeptide-transferase, found in Streptococcus pyogenes serotype M4 (strain MGAS10750).